The primary structure comprises 1990 residues: Protein TANC2 (1990 aa).

Disordered stretches follow at residues Met1–Glu85 and Ser129–Thr149. 4 positions are modified to phosphoserine: Ser169, Ser238, Ser294, and Ser400. Positions Ile396–Glu442 are disordered. Residues Pro419 to Cys431 are compositionally biased toward polar residues. ANK repeat units follow at residues Glu846–Tyr878, Asn884–Ala913, Ser917–His946, Asn950–Gly979, Ala990–Glu1019, Trp1033–Gln1062, Arg1066–Met1095, Gln1099–Leu1128, Glu1132–His1161, Asn1165–His1194, and Ser1198–Pro1227. 3 TPR repeats span residues Leu1244–Glu1277, Val1291–Ser1324, and Tyr1325–Asn1358. Disordered stretches follow at residues Cys1372 to His1401, Glu1430 to Gln1586, and Leu1692 to Gly1718. 2 positions are modified to phosphoserine: Ser1442 and Ser1458. The span at Arg1469–Tyr1498 shows a compositional bias: polar residues. A phosphoserine mark is found at Ser1530 and Ser1545. Polar residues predominate over residues Val1553–Gln1572. Residues Arg1563 and Arg1576 each carry the asymmetric dimethylarginine modification. Ser1579 carries the phosphoserine modification. Ser1722 carries the phosphoserine modification. Positions Ser1783–Thr1798 are enriched in low complexity. Disordered regions lie at residues Ser1783–Ser1803 and Asp1821–Thr1843. Residues Ser1824 and Ser1827 each carry the phosphoserine modification. Asn1928 carries an N-linked (GlcNAc...) asparagine glycan. The segment at Ser1968–Val1990 is disordered.

The protein belongs to the TANC family. As to quaternary structure, interacts with KIF1A; the interaction decreases in presence of calcium.

Its subcellular location is the cell projection. It is found in the dendritic spine. Functionally, scaffolding protein in the dendritic spines which acts as immobile postsynaptic posts able to recruit KIF1A-driven dense core vesicles to dendritic spines. The chain is Protein TANC2 (TANC2) from Homo sapiens (Human).